Reading from the N-terminus, the 307-residue chain is tRNA dimethylallyltransferase (307 aa).

11-18 (GPTGSGKT) is an ATP binding site. 13–18 (TGSGKT) is a binding site for substrate. Positions 36–39 (DSVA) are interaction with substrate tRNA.

It belongs to the IPP transferase family. Monomer. Mg(2+) is required as a cofactor.

The enzyme catalyses adenosine(37) in tRNA + dimethylallyl diphosphate = N(6)-dimethylallyladenosine(37) in tRNA + diphosphate. In terms of biological role, catalyzes the transfer of a dimethylallyl group onto the adenine at position 37 in tRNAs that read codons beginning with uridine, leading to the formation of N6-(dimethylallyl)adenosine (i(6)A). In Koribacter versatilis (strain Ellin345), this protein is tRNA dimethylallyltransferase.